The chain runs to 806 residues: Phenylalanine--tRNA ligase beta subunit (806 aa).

One can recognise a tRNA-binding domain in the interval 40 to 153 (FNSPDYLQLA…ADAIIIDHVS (114 aa)). Positions 413-487 (PFSKKLTVNF…KLIDINKLKP (75 aa)) constitute a B5 domain. 4 residues coordinate Mg(2+): aspartate 465, aspartate 471, glutamate 474, and glutamate 475.

Belongs to the phenylalanyl-tRNA synthetase beta subunit family. Type 1 subfamily. Tetramer of two alpha and two beta subunits. The cofactor is Mg(2+).

It localises to the cytoplasm. The enzyme catalyses tRNA(Phe) + L-phenylalanine + ATP = L-phenylalanyl-tRNA(Phe) + AMP + diphosphate + H(+). The protein is Phenylalanine--tRNA ligase beta subunit (pheT) of Mycoplasma genitalium (strain ATCC 33530 / DSM 19775 / NCTC 10195 / G37) (Mycoplasmoides genitalium).